The primary structure comprises 460 residues: Ribosomal protein uS12 methylthiotransferase RimO (460 aa).

One can recognise an MTTase N-terminal domain in the interval 16–130 (NKIHFISLGC…ILSAIESKEY (115 aa)). Positions 25, 61, 93, 164, 168, and 171 each coordinate [4Fe-4S] cluster. Residues 150–382 (STPKHYAYLK…SQAQKQNVEK (233 aa)) form the Radical SAM core domain. In terms of domain architecture, TRAM spans 385–455 (QKLVGQVVEA…GYDLIGRVVK (71 aa)).

This sequence belongs to the methylthiotransferase family. RimO subfamily. [4Fe-4S] cluster serves as cofactor.

The protein localises to the cytoplasm. It catalyses the reaction L-aspartate(89)-[ribosomal protein uS12]-hydrogen + (sulfur carrier)-SH + AH2 + 2 S-adenosyl-L-methionine = 3-methylsulfanyl-L-aspartate(89)-[ribosomal protein uS12]-hydrogen + (sulfur carrier)-H + 5'-deoxyadenosine + L-methionine + A + S-adenosyl-L-homocysteine + 2 H(+). Functionally, catalyzes the methylthiolation of an aspartic acid residue of ribosomal protein uS12. The polypeptide is Ribosomal protein uS12 methylthiotransferase RimO (Chlamydia felis (strain Fe/C-56) (Chlamydophila felis)).